A 788-amino-acid polypeptide reads, in one-letter code: Ribonucleoside-diphosphate reductase subunit alpha (788 aa).

The region spanning 2–92 (ITVVKRNGRI…LYDLYHKVSG (91 aa)) is the ATP-cone domain. ATP is bound by residues lysine 6, 12 to 18 (EPLDITK), and threonine 52. Position 200 (threonine 200) interacts with GDP. The cysteines at positions 216 and 497 are disulfide-linked. DTTP-binding positions include 223–225 (DNI) and arginine 253. A GDP-binding site is contributed by asparagine 424. The active-site Proton acceptor is asparagine 424. Cysteine 426 functions as the Cysteine radical intermediate in the catalytic mechanism. GDP-binding positions include glutamate 428 and 661 to 663 (SSI). Catalysis depends on glutamate 428, which acts as the Proton acceptor.

The protein belongs to the ribonucleoside diphosphate reductase large chain family. In terms of assembly, tetramer of two alpha and two beta subunits.

It carries out the reaction a 2'-deoxyribonucleoside 5'-diphosphate + [thioredoxin]-disulfide + H2O = a ribonucleoside 5'-diphosphate + [thioredoxin]-dithiol. Its activity is regulated as follows. Under complex allosteric control mediated by deoxynucleoside triphosphates and ATP binding to separate specificity and activation sites on the alpha subunit. The type of nucleotide bound at the specificity site determines substrate preference. It seems probable that ATP makes the enzyme reduce CDP and UDP, dGTP favors ADP reduction and dTTP favors GDP reduction. Stimulated by ATP and inhibited by dATP binding to the activity site. Provides the precursors necessary for DNA synthesis. Catalyzes the biosynthesis of deoxyribonucleotides from the corresponding ribonucleotides. This chain is Ribonucleoside-diphosphate reductase subunit alpha (nrdA), found in Helicobacter pylori (strain ATCC 700392 / 26695) (Campylobacter pylori).